A 257-amino-acid chain; its full sequence is 5'-nucleotidase SurE (257 aa).

The a divalent metal cation site is built by D8, D9, S40, and N95.

The protein belongs to the SurE nucleotidase family. A divalent metal cation is required as a cofactor.

It is found in the cytoplasm. It catalyses the reaction a ribonucleoside 5'-phosphate + H2O = a ribonucleoside + phosphate. In terms of biological role, nucleotidase that shows phosphatase activity on nucleoside 5'-monophosphates. The protein is 5'-nucleotidase SurE of Desulfovibrio desulfuricans (strain ATCC 27774 / DSM 6949 / MB).